Here is a 109-residue protein sequence, read N- to C-terminus: Arminin 6560 (109 aa).

The first 21 residues, methionine 1–glycine 21, serve as a signal peptide directing secretion. The propeptide occupies valine 22–isoleucine 77. Position 106 is an isoleucine amide (isoleucine 106).

It belongs to the arminin family. As to expression, expressed in the ectodermal epithelium.

It is found in the secreted. The protein resides in the target cell membrane. Functionally, antimicrobial peptide with a broad-spectrum antimicrobial activity. Keeps its antibacterial activity under a wide range of salt concentrations that mimic physiological conditions of human blood, which is surprising, since Hydra is an obligate freshwater animal with nearly no salt tolerance. Does not affect red blood cells. In Hydra vulgaris (Hydra), this protein is Arminin 6560.